Here is a 136-residue protein sequence, read N- to C-terminus: Small ribosomal subunit protein uS9 (136 aa).

The interval 97–136 (SPDNRKPLKTEGHLSRDPRAKERRKYGLKKARKAPQFSKR) is disordered. Positions 98 to 116 (PDNRKPLKTEGHLSRDPRA) are enriched in basic and acidic residues. The segment covering 117-136 (KERRKYGLKKARKAPQFSKR) has biased composition (basic residues).

This sequence belongs to the universal ribosomal protein uS9 family.

This chain is Small ribosomal subunit protein uS9, found in Prochlorococcus marinus (strain MIT 9301).